Here is a 306-residue protein sequence, read N- to C-terminus: Elongation factor Ts (306 aa).

Residues 80–83 (TDFV) form an involved in Mg(2+) ion dislocation from EF-Tu region.

It belongs to the EF-Ts family.

It is found in the cytoplasm. Functionally, associates with the EF-Tu.GDP complex and induces the exchange of GDP to GTP. It remains bound to the aminoacyl-tRNA.EF-Tu.GTP complex up to the GTP hydrolysis stage on the ribosome. The sequence is that of Elongation factor Ts from Clostridium kluyveri (strain NBRC 12016).